We begin with the raw amino-acid sequence, 393 residues long: Uroporphyrinogen decarboxylase, chloroplastic (393 aa).

Residues M1–V64 are disordered. Over residues A23 to P37 the composition is skewed to low complexity. Residues S38–G50 are compositionally biased toward basic and acidic residues. Residues R73–R77, F92, S122, D123, Y200, S255, and H370 contribute to the substrate site.

Belongs to the uroporphyrinogen decarboxylase family. In terms of assembly, homodimer.

Its subcellular location is the plastid. It localises to the chloroplast. The catalysed reaction is uroporphyrinogen III + 4 H(+) = coproporphyrinogen III + 4 CO2. Its pathway is porphyrin-containing compound metabolism; protoporphyrin-IX biosynthesis; coproporphyrinogen-III from 5-aminolevulinate: step 4/4. Functionally, catalyzes the decarboxylation of four acetate groups of uroporphyrinogen-III to yield coproporphyrinogen-III. The chain is Uroporphyrinogen decarboxylase, chloroplastic (LES22) from Zea mays (Maize).